The following is a 208-amino-acid chain: Single-stranded DNA-binding protein DdrA (208 aa).

The protein belongs to the RAD52 family. As to quaternary structure, homooligomer composed of 8 to 10 subunits; probably arranged in a ring-structure.

Its function is as follows. ssDNA-binding protein that contributes to the ionizing radiation resistance of D.radiodurans. Plays a role in DNA repair and genome reconstitution, in a RecA-independent process, since DdrA is essential for recovery from severe genomic fragmentation as a result of exposure to severe levels of ionizing radiation in an environment lacking nutrients. In vitro, binds to the 3'-ends of single-stranded DNA, protecting them from nuclease degradation. Thus, DdrA is part of a DNA end-protection system that helps to preserve genome integrity following irradiation or desiccation. Does not display DNA strand annealing activity, unlike eukaryotic Rad52 protein homologs. The chain is Single-stranded DNA-binding protein DdrA (ddrA) from Deinococcus radiodurans (strain ATCC 13939 / DSM 20539 / JCM 16871 / CCUG 27074 / LMG 4051 / NBRC 15346 / NCIMB 9279 / VKM B-1422 / R1).